A 744-amino-acid chain; its full sequence is Serine/threonine-protein kinase GM11705 (744 aa).

Polar residues predominate over residues 17–35; the sequence is VLSSHQPSPSATHPQSVPS. 2 disordered regions span residues 17-38 and 54-78; these read VLSSHQPSPSATHPQSVPSKAN and NVQEDNSYNRDCDSPVSSSSEPEKE. Doublecortin domains are found at residues 154 to 240 and 309 to 392; these read LRIK…VEYN and RIVT…AEDF. A Protein kinase domain is found at 473–731; the sequence is YTLGRIIGDG…SEDILDHPWT (259 aa). ATP contacts are provided by residues 479-487 and lysine 502; that span reads IGDGNFAIV. Catalysis depends on aspartate 594, which acts as the Proton acceptor.

It belongs to the protein kinase superfamily. CAMK Ser/Thr protein kinase family. CaMK subfamily.

The catalysed reaction is L-seryl-[protein] + ATP = O-phospho-L-seryl-[protein] + ADP + H(+). It carries out the reaction L-threonyl-[protein] + ATP = O-phospho-L-threonyl-[protein] + ADP + H(+). This Drosophila sechellia (Fruit fly) protein is Serine/threonine-protein kinase GM11705.